Reading from the N-terminus, the 90-residue chain is Small ribosomal subunit protein uS17 (90 aa).

Belongs to the universal ribosomal protein uS17 family. Part of the 30S ribosomal subunit.

Its function is as follows. One of the primary rRNA binding proteins, it binds specifically to the 5'-end of 16S ribosomal RNA. This Paraburkholderia phytofirmans (strain DSM 17436 / LMG 22146 / PsJN) (Burkholderia phytofirmans) protein is Small ribosomal subunit protein uS17.